Here is a 325-residue protein sequence, read N- to C-terminus: Probable exonuclease subunit 1 (325 aa).

In terms of assembly, could consist of two subunits: D13 and D12.

Functionally, possible exonuclease involved in phage DNA recombination, replication, and repair. This Escherichia coli (Enterobacteria phage T5) protein is Probable exonuclease subunit 1 (D12).